The primary structure comprises 251 residues: Triosephosphate isomerase (251 aa).

Substrate is bound at residue 9–11 (NWK). His-95 functions as the Electrophile in the catalytic mechanism. The Proton acceptor role is filled by Glu-167. Residues Gly-173, Ser-212, and 233 to 234 (GG) each bind substrate.

It belongs to the triosephosphate isomerase family. As to quaternary structure, homodimer.

It localises to the cytoplasm. The catalysed reaction is D-glyceraldehyde 3-phosphate = dihydroxyacetone phosphate. It functions in the pathway carbohydrate biosynthesis; gluconeogenesis. Its pathway is carbohydrate degradation; glycolysis; D-glyceraldehyde 3-phosphate from glycerone phosphate: step 1/1. In terms of biological role, involved in the gluconeogenesis. Catalyzes stereospecifically the conversion of dihydroxyacetone phosphate (DHAP) to D-glyceraldehyde-3-phosphate (G3P). This Vibrio sp. (strain ANT-300) protein is Triosephosphate isomerase.